The primary structure comprises 451 residues: Trigger factor (451 aa).

The PPIase FKBP-type domain maps to 165 to 250 (DDKLTIDFEG…LHQIQAREVL (86 aa)).

The protein belongs to the FKBP-type PPIase family. Tig subfamily.

The protein resides in the cytoplasm. The enzyme catalyses [protein]-peptidylproline (omega=180) = [protein]-peptidylproline (omega=0). In terms of biological role, involved in protein export. Acts as a chaperone by maintaining the newly synthesized protein in an open conformation. Functions as a peptidyl-prolyl cis-trans isomerase. This chain is Trigger factor, found in Helicobacter acinonychis (strain Sheeba).